Consider the following 504-residue polypeptide: Aspartyl/glutamyl-tRNA(Asn/Gln) amidotransferase subunit B (504 aa).

The protein belongs to the GatB/GatE family. GatB subfamily. As to quaternary structure, heterotrimer of A, B and C subunits.

The catalysed reaction is L-glutamyl-tRNA(Gln) + L-glutamine + ATP + H2O = L-glutaminyl-tRNA(Gln) + L-glutamate + ADP + phosphate + H(+). It carries out the reaction L-aspartyl-tRNA(Asn) + L-glutamine + ATP + H2O = L-asparaginyl-tRNA(Asn) + L-glutamate + ADP + phosphate + 2 H(+). Allows the formation of correctly charged Asn-tRNA(Asn) or Gln-tRNA(Gln) through the transamidation of misacylated Asp-tRNA(Asn) or Glu-tRNA(Gln) in organisms which lack either or both of asparaginyl-tRNA or glutaminyl-tRNA synthetases. The reaction takes place in the presence of glutamine and ATP through an activated phospho-Asp-tRNA(Asn) or phospho-Glu-tRNA(Gln). The protein is Aspartyl/glutamyl-tRNA(Asn/Gln) amidotransferase subunit B of Rhodococcus opacus (strain B4).